A 43-amino-acid polypeptide reads, in one-letter code: Protein PsbN (43 aa).

Residues 4-24 (GILVVIFISCLLVSFTGYTIY) form a helical membrane-spanning segment.

It belongs to the PsbN family.

The protein resides in the plastid. It localises to the chloroplast thylakoid membrane. In terms of biological role, may play a role in photosystem I and II biogenesis. In Chaetosphaeridium globosum (Charophycean green alga), this protein is Protein PsbN.